The chain runs to 547 residues: CAP-Gly domain-containing linker protein 3 (547 aa).

Residues 1-49 (MTKTDPAPMAPPPRGEEEEEEEEDEPVPEAPSPTQERRQKPVVHPSAPA) are disordered. Residues 16–27 (EEEEEEEEDEPV) are compositionally biased toward acidic residues. ANK repeat units lie at residues 117 to 155 (TDMT…DVTL), 160 to 189 (TNMN…PRVV), and 197 to 226 (NHGS…NPAL). The CAP-Gly 1 domain occupies 314 to 356 (GTTEFASGQWVGVELDEPEGKNDGSVGGVRYFICPPKQGLFAS). The segment at 365 to 413 (DAPPSSVTSTPRTPRMDFSRVTGKGRREHKGKKKTPSSPSLGSLQQRDR) is disordered. Low complexity predominate over residues 367–377 (PPSSVTSTPRT). Threonine 374 carries the post-translational modification Phosphothreonine. Positions 387 to 399 (GKGRREHKGKKKT) are enriched in basic residues. The span at 400–409 (PSSPSLGSLQ) shows a compositional bias: polar residues. Phosphoserine is present on serine 401. Residues 436 to 478 (GKTDFAPGYWYGIELDQPTGKHDGSVFGVRYFTCPPRHGVFAP) form the CAP-Gly 2 domain. The goLD stretch occupies residues 488–547 (STDSPGDSVGAKKVHQVTMTQPKRTFTTVRTPKDIASENSISRLLFCCWFPWMLRAEMQS). Residues cysteine 534 and cysteine 535 are each lipidated (S-palmitoyl cysteine).

As to quaternary structure, homodimer. Interacts with AKT1 and AKT2; when AKT1 and AKT2 are phosphorylated and activated, affinity is higher for AKT2. Interacts with ZDHHC13 (via ANK repeats). Interacts with ZDHHC17 (via ANK repeats). Palmitoylation by ZDHHC17 regulates association with the plasma membrane.

It is found in the cell membrane. The protein localises to the cytoplasm. Its subcellular location is the golgi apparatus. The protein resides in the golgi stack. Functions as a cytoplasmic linker protein. Involved in TGN-endosome dynamics. May modulate the cellular compartmentalization of AKT kinase family and promote its cell membrane localization, thereby playing a role in glucose transport in adipocytes. This chain is CAP-Gly domain-containing linker protein 3 (CLIP3), found in Pongo abelii (Sumatran orangutan).